Consider the following 145-residue polypeptide: Large ribosomal subunit protein bL9 (145 aa).

Belongs to the bacterial ribosomal protein bL9 family.

Binds to the 23S rRNA. The protein is Large ribosomal subunit protein bL9 of Mesomycoplasma hyopneumoniae (strain 232) (Mycoplasma hyopneumoniae).